A 348-amino-acid chain; its full sequence is D-lactate dehydrogenase kk1H (348 aa).

Residues 158–159 (RI), Asp178, 208–209 (CP), 235–237 (TSR), and Asp261 contribute to the NAD(+) site. Arg237 is an active-site residue. Residue Glu266 is part of the active site. The Proton donor role is filled by His298.

The protein belongs to the D-isomer specific 2-hydroxyacid dehydrogenase family.

The protein operates within secondary metabolite biosynthesis. In terms of biological role, D-lactate dehydrogenase; part of the gene cluster that mediates the biosynthesis of KK-1, a novel cyclic depsipeptide with 10 residues which is a promising active compound with high activity against many plant pathogens, especially Botrytis cinerea. Within the pathway, kk1H catalyzes in the synthesis of D-lactic acid from pyruvic acid, which is recognized by the A domain of the first kk1B module. The nonribosomal peptide synthetase (NRPS) kk1B catalyzes the elongation and cyclization of the decapeptide chain composed of 1 D-lactic acid residue (D-Lac), 1 pipecolic acid residue (Pip), 1 aspartic acid residue (Asp), 1 isoleucine residue (Ile), 1 glycine residue (Gly), 1 tyrosine residue (Tyr) and 4 valine residues (Val). The Asp, Ile and 3 Val residues are N-methylated by the 5 methyltransferase domains from the NRPS (found in modules 3, 5, 6, 7 and 9), whereas the Tyr residue is O-methylated by the cluster encoded O-methyltransferase kk1A. The thioesterase kk1J is likely to be involved in the corrective mechanism of peptide chain synthesis. The D-lactate dehydrogenase kk1H is involved in the synthesis of D-lactic acid from pyruvic acid, which is recognized by the A domain of the first kk1B module. The pyrroline-5-carboxylate reductase kk1I is involved in the synthesis of the L-pipecolic acid residue of KK-1 from delta-1-pyrroline-5-carboxylate (P5C), a metabolic intermediate of lysine. It still is unclear how kk1C and kk1D are involved in the production of KK-1. The polypeptide is D-lactate dehydrogenase kk1H (Curvularia clavata).